A 218-amino-acid chain; its full sequence is Cytochrome b6 (218 aa).

The chain crosses the membrane as a helical span at residues isoleucine 35–phenylalanine 55. Position 38 (cysteine 38) interacts with heme c. Histidine 89 and histidine 103 together coordinate heme b. Transmembrane regions (helical) follow at residues alanine 93–phenylalanine 113, leucine 119–tyrosine 139, and leucine 189–isoleucine 209. Heme b is bound by residues histidine 190 and histidine 205.

The protein belongs to the cytochrome b family. PetB subfamily. The 4 large subunits of the cytochrome b6-f complex are cytochrome b6, subunit IV (17 kDa polypeptide, PetD), cytochrome f and the Rieske protein, while the 4 small subunits are PetG, PetL, PetM and PetN. The complex functions as a dimer. Heme b is required as a cofactor. Heme c serves as cofactor.

It is found in the cellular thylakoid membrane. In terms of biological role, component of the cytochrome b6-f complex, which mediates electron transfer between photosystem II (PSII) and photosystem I (PSI), cyclic electron flow around PSI, and state transitions. The polypeptide is Cytochrome b6 (Prochlorococcus marinus (strain MIT 9301)).